Consider the following 790-residue polypeptide: Polyribonucleotide nucleotidyltransferase (790 aa).

Mg(2+) contacts are provided by aspartate 498 and aspartate 504. The region spanning 565-624 (PRILRIKIKPEQIGEVIGPGGRVIRAIQEQTGTKISIEEDGTVFISAANEDAARRAVREI) is the KH domain. The S1 motif domain occupies 634-702 (GEIFYGRVVT…PDGKINLSRK (69 aa)). Positions 710 to 790 (AERAATAQAP…KELLGEDEPN (81 aa)) are disordered. Over residues 739–755 (PERRPGPPTPRRPEQRG) the composition is skewed to basic and acidic residues. The segment covering 757–772 (SRPPRPQAQRSTPPPG) has biased composition (pro residues).

The protein belongs to the polyribonucleotide nucleotidyltransferase family. Mg(2+) serves as cofactor.

The protein localises to the cytoplasm. The catalysed reaction is RNA(n+1) + phosphate = RNA(n) + a ribonucleoside 5'-diphosphate. Its function is as follows. Involved in mRNA degradation. Catalyzes the phosphorolysis of single-stranded polyribonucleotides processively in the 3'- to 5'-direction. In Thermomicrobium roseum (strain ATCC 27502 / DSM 5159 / P-2), this protein is Polyribonucleotide nucleotidyltransferase.